The sequence spans 168 residues: uncharacterized protein (168 aa).

It localises to the mitochondrion. This is an uncharacterized protein from Marchantia polymorpha (Common liverwort).